The following is a 362-amino-acid chain: Protein RecA (362 aa).

77–84 provides a ligand contact to ATP; that stretch reads GPESSGKT.

The protein belongs to the RecA family.

The protein resides in the cytoplasm. Can catalyze the hydrolysis of ATP in the presence of single-stranded DNA, the ATP-dependent uptake of single-stranded DNA by duplex DNA, and the ATP-dependent hybridization of homologous single-stranded DNAs. It interacts with LexA causing its activation and leading to its autocatalytic cleavage. The protein is Protein RecA of Allorhizobium ampelinum (strain ATCC BAA-846 / DSM 112012 / S4) (Agrobacterium vitis (strain S4)).